We begin with the raw amino-acid sequence, 54 residues long: Light-harvesting protein B-870 beta chain (54 aa).

At Glu1–Lys20 the chain is on the cytoplasmic side. A bacteriochlorophyll is bound by residues His19 and His37. The helical transmembrane segment at Ile21–Trp43 threads the bilayer. Residues Arg44–Ser54 are Periplasmic-facing.

This sequence belongs to the antenna complex beta subunit family. As to quaternary structure, the core complex is formed by different alpha and beta chains, binding bacteriochlorophyll molecules, and arranged most probably in tetrameric structures disposed around the reaction center. The non-pigmented gamma chains may constitute additional components.

It localises to the cell inner membrane. Functionally, antenna complexes are light-harvesting systems, which transfer the excitation energy to the reaction centers. This chain is Light-harvesting protein B-870 beta chain, found in Rhodospirillum rubrum.